The chain runs to 74 residues: Chitinases 70, 30, and 20.5 kDa (74 aa).

The interval 1–27 (XTSATATYAKTQDWGSCFEGKWTIKNT) is N-terminus of 70 kDa chitinase. An N-terminus of 30 kDa chitinase region spans residues 28–52 (AACSSYPSWVAGRSYAAGDIVYYTD). Positions 53-74 (XGYTDLPVSRQKMCQNGMVTNC) are N-terminus of 20.5 kDa chitinase.

Belongs to the glycosyl hydrolase 18 family. Chitinase class II subfamily. In terms of assembly, homodimer, but homotrimers and homotetramers could be observed for the 20.5 and 30 kDa chitinases. The 70 kDa chitinase is probably the precursor protein of the 30 and 20.5 kDa chitinases.

The catalysed reaction is Random endo-hydrolysis of N-acetyl-beta-D-glucosaminide (1-&gt;4)-beta-linkages in chitin and chitodextrins.. Its function is as follows. Able to cleave chitin oligomers from N=3 to 6. This chain is Chitinases 70, 30, and 20.5 kDa, found in Streptomyces olivaceoviridis (Streptomyces corchorusii).